Consider the following 197-residue polypeptide: Protein tyrosine phosphatase receptor type C-associated protein (197 aa).

Residues 33–53 form a helical membrane-spanning segment; it reads VVTIVLLLLLLLLLVTALALA. Phosphoserine is present on residues Ser99 and Ser103. 2 disordered regions span residues 120-164 and 177-197; these read GPEE…GSSA and SAAW…VTAL. The segment covering 124–145 has biased composition (basic and acidic residues); sequence AAAKEEEQRCQAEQTRDPRDTD.

In terms of assembly, interacts with CD45/PTPRC. Post-translationally, phosphorylated on tyrosine residues. Leukocyte-specific. Expressed in B- and T-cell lines, in spleen, thymus, and bone marrow of adult mice, and in embryos.

The protein localises to the membrane. The chain is Protein tyrosine phosphatase receptor type C-associated protein (Ptprcap) from Mus musculus (Mouse).